The sequence spans 430 residues: Ethylene-responsive transcription factor WRI1 (430 aa).

Residues 1–26 are compositionally biased toward low complexity; it reads MKKRLTTSTCSSSPSSSVSSSTTTSS. The disordered stretch occupies residues 1 to 66; sequence MKKRLTTSTC…PASTRRSSIY (66 aa). Residues 53–63 show a composition bias toward polar residues; that stretch reads NPTSPASTRRS. Residues 65 to 131 constitute a DNA-binding region (AP2/ERF 1); the sequence is IYRGVTRHRW…WGPDTILNFP (67 aa). Threonine 70 is subject to Phosphothreonine; by KIN10. Serine 166 bears the Phosphoserine; by KIN10 mark. Residues 167–225 constitute a DNA-binding region (AP2/ERF 2); it reads KYRGVARHHHNGRWEARIGRVFGNKYLYLGTYNTQEEAAAAYDMAAIEYRGANAVTNFD. Positions 260 to 274 are enriched in basic and acidic residues; the sequence is VETREAKEEPREEVK. Disordered stretches follow at residues 260 to 297 and 398 to 422; these read VETR…EQQE and SPPS…TTTT.

Belongs to the AP2/ERF transcription factor family. AP2 subfamily. As to quaternary structure, interacts with KIN10 and KIN11. In terms of processing, ubiquitinated. The phosphorylation at Thr-70 and Ser-166 by KIN10 facilitates its degradation via the proteasomal pathway. Mostly expressed in siliques, especially in seeds. Also detected in roots and flowers, and, to a lower extent, in leaves stems and seedlings.

It is found in the nucleus. Down-regulated by KIN10 that controls its protein stability under a phosphorylation-dependent manner. May be involved in the regulation of gene expression by stress factors and by components of stress signal transduction pathways. Transcriptional activator involved in the activation of a subset of sugar-responsive genes and the control of carbon flow from sucrose import to oil accumulation in developing seeds. Binds to the GCC-box pathogenesis-related promoter element. Promotes sugar uptake and seed oil accumulation by glycolysis. Required for embryo development, seed germination and, indirectly, for seedling establishment. Negative regulator of the ABA-mediated germination inhibition. This chain is Ethylene-responsive transcription factor WRI1 (WRI1), found in Arabidopsis thaliana (Mouse-ear cress).